The sequence spans 228 residues: Rab-like protein 2A (228 aa).

GTP is bound by residues 28–35 (GDSAVGKS), 76–80 (DTAGQ), and 133–136 (NKID). The interval 200–228 (LEQEEEDVPDQEQSSSIETPSEEVASPHS) is disordered.

Belongs to the small GTPase superfamily. Rab family. As to quaternary structure, interacts with IFT27, IFT81, IFT172, ATP6V1E1, HK1, LDHC, MAPRE1 and HSPA2. As to expression, expressed in the testis.

Its function is as follows. Plays an essential role in male fertility, sperm intra-flagellar transport, and tail assembly. Binds, in a GTP-regulated manner, to a specific set of effector proteins including key proteins involved in cilia development and function and delivers them into the growing sperm tail. The polypeptide is Rab-like protein 2A (RABL2A) (Homo sapiens (Human)).